Here is a 235-residue protein sequence, read N- to C-terminus: Large ribosomal subunit protein uL1 (235 aa).

This sequence belongs to the universal ribosomal protein uL1 family. In terms of assembly, part of the 50S ribosomal subunit.

Binds directly to 23S rRNA. The L1 stalk is quite mobile in the ribosome, and is involved in E site tRNA release. Functionally, protein L1 is also a translational repressor protein, it controls the translation of the L11 operon by binding to its mRNA. The sequence is that of Large ribosomal subunit protein uL1 from Synechococcus sp. (strain CC9605).